We begin with the raw amino-acid sequence, 425 residues long: CAAX prenyl protease 1 homolog (425 aa).

5 helical membrane-spanning segments follow: residues 3–23, 62–80, 109–129, 155–175, and 188–208; these read LPYLEAVLCFMILMYIFETYL, FHFIHEAVTILMDTTILYY, LAFLAGVMIWSQITDLPFSLY, GILLSILLGPPIVAAIIIIVQ, and FMFALSLVMMTIYPIVIAPLF. His-284 serves as a coordination point for Zn(2+). Residue Glu-285 is part of the active site. Residue His-288 coordinates Zn(2+). 2 consecutive transmembrane segments (helical) span residues 295–315 and 332–352; these read VYSFVAVQLLMFLQFGGYTLV and VIIGLIIFQHTIIPVQHLLSF. Position 362 (Glu-362) interacts with Zn(2+). Residue Asp-366 is the Proton donor of the active site.

Belongs to the peptidase M48A family. It depends on Zn(2+) as a cofactor.

The protein resides in the endoplasmic reticulum membrane. It catalyses the reaction Hydrolyzes the peptide bond -P2-(S-farnesyl or geranylgeranyl)C-P1'-P2'-P3'-COOH where P1' and P2' are amino acids with aliphatic side chains and P3' is any C-terminal residue.. In terms of biological role, proteolytically removes the C-terminal three residues of farnesylated proteins. This Oryza sativa subsp. japonica (Rice) protein is CAAX prenyl protease 1 homolog (FACE1).